A 929-amino-acid chain; its full sequence is MDKNYNPQAIEQYWYQIWEQKGYFTPQGKDSSYCIMIPPPNVTGHLHMGHAFQSTIMDALIRYHRMRGDDTLWQVGADHAGIATQMVVENQLNAEGKTRHDLGREAFIQRVWEWKEHSGGTITRQLRRMGTSVDWSRERFTMDEGLSQAVGEVFVRLYDEGLLYRGKRLVNWDSVLHTAISDLEVISEEENSHLWHMRYPLSDGSGHLVVATTRPETMLGDTAVAVHPEDPRYQHLIGKTVALPLTDRTIPVIADDYVEPEFGSGCVKITPAHDFNDYEVGQRHGLPFINIFTVDASLNENVPERYRNLDRFEARKLVVADLEAAGLLEKIEDHKLMVPRGDRSRTVIEPYLTDQWFVKTAPLAEPAIQAVENGQIRFIPENWNKIYFEWMRNIQDWCISRQIWWGHRIPAWYDPEGKIYVAPTETQARQKYNLPPDLPLEQDPDVLDTWFSSALWPFSTLGWPEDTSLLRAFYPTSVLVTGFDIIFFWVARMIMMGLKFTGEVPFHEVYIHGLVRDAEGQKMSKSKGNVLDPLDLIDGIDLETLVTKRTGGLMQPAMAKRIEKATRKEFPQGIPSFGCDALRFTFAILATRGRDIRFDLGRIEGYRNFCNKLWNAARYVLINVSSEISVERQGKPEQAEENLMLGAPERWIISRFHSTTQEVIEGIENYRFDRVAQAIYNFTWNEYCDWYLELSKPVLNNPASPEAAKRRTRHTLVHVLEALLRLAHPIIPFITEEIWQQVGPLAGRQGKTIMLQPYPQPEIDKIDEDAVAEIEWVIAFVTGVRSIRSQMNIAPGKPIPLLLQAGKAHDRTRLESNQKFLAALAKLDSIQWLKDETPPPAATALVDELKLLIPLAGLIDKEAELKRLDREMQRMRKDLARVQGKLANSNYVERAPAEIVAKERQRAQEVTAALSTLEQQHAEITDLNP.

The short motif at 40 to 50 (PNVTGHLHMGH) is the 'HIGH' region element. Positions 522–526 (KMSKS) match the 'KMSKS' region motif. Lys525 contributes to the ATP binding site. The stretch at 855–926 (LAGLIDKEAE…LEQQHAEITD (72 aa)) forms a coiled coil.

Belongs to the class-I aminoacyl-tRNA synthetase family. ValS type 1 subfamily. As to quaternary structure, monomer.

Its subcellular location is the cytoplasm. The catalysed reaction is tRNA(Val) + L-valine + ATP = L-valyl-tRNA(Val) + AMP + diphosphate. In terms of biological role, catalyzes the attachment of valine to tRNA(Val). As ValRS can inadvertently accommodate and process structurally similar amino acids such as threonine, to avoid such errors, it has a 'posttransfer' editing activity that hydrolyzes mischarged Thr-tRNA(Val) in a tRNA-dependent manner. The polypeptide is Valine--tRNA ligase (Nitrosococcus oceani (strain ATCC 19707 / BCRC 17464 / JCM 30415 / NCIMB 11848 / C-107)).